A 140-amino-acid chain; its full sequence is Small ribosomal subunit protein bS6 (140 aa).

Residues 96–140 (VTGQSEMLKAEENRSERRERRERPENAESNDGDDSDSNDSDNADE) form a disordered region. The segment covering 103 to 121 (LKAEENRSERRERRERPEN) has biased composition (basic and acidic residues). The segment covering 123–140 (ESNDGDDSDSNDSDNADE) has biased composition (acidic residues).

This sequence belongs to the bacterial ribosomal protein bS6 family.

Its function is as follows. Binds together with bS18 to 16S ribosomal RNA. The chain is Small ribosomal subunit protein bS6 from Ectopseudomonas mendocina (strain ymp) (Pseudomonas mendocina).